We begin with the raw amino-acid sequence, 846 residues long: uncharacterized protein (846 aa).

Disordered stretches follow at residues 159–217, 254–276, 332–414, 459–501, 556–651, and 803–846; these read VPTF…INHI, CNLN…SNSN, NKLN…PLSI, GSSI…SNSL, QQQQ…NFND, and TTTT…NKNK. Residues 163–217 show a composition bias toward low complexity; that stretch reads HNQNQNNNNQNNNQNNNNNNNNNNNNNNNNNNNNNNNSQNNNNNQNNNNNHINHI. Over residues 355–414 the composition is skewed to low complexity; sequence LQSPNSQSLANSSANISSNALNQSSSSQQQQPQSTSQQQQQQHKMNSSSGNISPPLPLSI. The span at 459-482 shows a compositional bias: polar residues; the sequence is GSSITPKNLSPLSSSAPNTPKQFA. Low complexity-rich tracts occupy residues 483–501, 568–642, and 811–846; these read SLSS…SNSL, QQQQ…QPNN, and NNNN…NKNK.

This is an uncharacterized protein from Dictyostelium discoideum (Social amoeba).